A 666-amino-acid polypeptide reads, in one-letter code: ATP-dependent RNA helicase MSS116, mitochondrial (666 aa).

The transit peptide at 1 to 22 (MLRHCSLGLVTTQISAIAPLRL) directs the protein to the mitochondrion. The span at 38-60 (RDRRSSRSREDKPYNSRTRRFDD) shows a compositional bias: basic and acidic residues. The disordered stretch occupies residues 38–131 (RDRRSSRSRE…KSYSKGGNTS (94 aa)). A compositionally biased stretch (polar residues) spans 120–131 (NTKSYSKGGNTS). The Q motif motif lies at 159 to 187 (SLLEKNVISRDLYDSISRMGFEQLTPVQQ). One can recognise a Helicase ATP-binding domain in the interval 192–379 (PIITNSDSDI…NDIMNKEECL (188 aa)). 205–212 (AKTGTGKT) contributes to the ATP binding site. A DEAD box motif is present at residues 320–323 (DEAD). Positions 408–560 (NLYAAIEHIR…NIRKFEAQPH (153 aa)) constitute a Helicase C-terminal domain.

This sequence belongs to the DEAD box helicase family. DDX18/HAS1 subfamily.

It localises to the mitochondrion matrix. It catalyses the reaction ATP + H2O = ADP + phosphate + H(+). Functionally, ATP-dependent RNA helicase required for mitochondrial splicing of group I and II introns. Also required for efficient mitochondrial translation. The chain is ATP-dependent RNA helicase MSS116, mitochondrial (MSS116) from Candida glabrata (strain ATCC 2001 / BCRC 20586 / JCM 3761 / NBRC 0622 / NRRL Y-65 / CBS 138) (Yeast).